Consider the following 83-residue polypeptide: AAPANAVTADDPTAIALKYNQDATKSERVAAARPGLPPEEQHCANCQFMQANVGEGDWKGCQLFPGKLINVNGWCASWTLKAG.

Residues Cys43, Cys46, Cys61, and Cys75 each contribute to the [4Fe-4S] cluster site.

This sequence belongs to the high-potential iron-sulfur protein (HiPIP) family. Homodimer.

Specific class of high-redox-potential 4Fe-4S ferredoxins. Functions in anaerobic electron transport in most purple and in some other photosynthetic bacteria and in at least one genus (Paracoccus) of halophilic, denitrifying bacteria. This is High-potential iron-sulfur protein (hip) from Thermochromatium tepidum (Chromatium tepidum).